The chain runs to 304 residues: UDP-N-acetylenolpyruvoylglucosamine reductase (304 aa).

One can recognise an FAD-binding PCMH-type domain in the interval K28–G193. R172 is a catalytic residue. The active-site Proton donor is S222. The active site involves E292.

Belongs to the MurB family. Requires FAD as cofactor.

It is found in the cytoplasm. The catalysed reaction is UDP-N-acetyl-alpha-D-muramate + NADP(+) = UDP-N-acetyl-3-O-(1-carboxyvinyl)-alpha-D-glucosamine + NADPH + H(+). It functions in the pathway cell wall biogenesis; peptidoglycan biosynthesis. Functionally, cell wall formation. In Levilactobacillus brevis (strain ATCC 367 / BCRC 12310 / CIP 105137 / JCM 1170 / LMG 11437 / NCIMB 947 / NCTC 947) (Lactobacillus brevis), this protein is UDP-N-acetylenolpyruvoylglucosamine reductase.